Here is a 174-residue protein sequence, read N- to C-terminus: Probable inosine/xanthosine triphosphatase (174 aa).

A Mg(2+)-binding site is contributed by D63.

This sequence belongs to the YjjX NTPase family. Homodimer. The cofactor is Mg(2+). Mn(2+) serves as cofactor.

The catalysed reaction is XTP + H2O = XDP + phosphate + H(+). It carries out the reaction ITP + H2O = IDP + phosphate + H(+). Phosphatase that hydrolyzes non-canonical purine nucleotides such as XTP and ITP to their respective diphosphate derivatives. Probably excludes non-canonical purines from DNA/RNA precursor pool, thus preventing their incorporation into DNA/RNA and avoiding chromosomal lesions. This Methanocella arvoryzae (strain DSM 22066 / NBRC 105507 / MRE50) protein is Probable inosine/xanthosine triphosphatase.